A 261-amino-acid chain; its full sequence is 14-3-3-like protein B (261 aa).

The tract at residues 237-261 (DIPEDGEDSQKANGTAKFGGGDDAE) is disordered.

The protein belongs to the 14-3-3 family.

The protein is 14-3-3-like protein B of Vicia faba (Broad bean).